The primary structure comprises 317 residues: Tricarboxylate transport protein B, mitochondrial (317 aa).

Positions 1 to 20 are cleaved as a propeptide — removed in mature form; it reads MSGSPKFVSPFHRPHCLSAA. Solcar repeat units lie at residues 29 to 117, 128 to 214, and 224 to 309; these read THPG…LSNQ, TRGL…LRNW, and INPV…VVKV. A run of 4 helical transmembrane segments spans residues 35 to 55, 130 to 150, 223 to 243, and 294 to 314; these read ILAG…TEYV, GLIC…CPME, SINP…SVFG, and MDVA…NKVW.

It belongs to the mitochondrial carrier (TC 2.A.29) family. In terms of processing, possesses a short cleavable presequence, which, however, is found to be dispensable both for targeting to mitochondria and insertion into the inner membrane. However, the presequence is required to keep SLC25A1 in a soluble state and thus in an import-competent state. Mature SLC25A1 lacking the presequence is prone to aggregation.

The protein resides in the mitochondrion inner membrane. The enzyme catalyses (S)-malate(in) + citrate(out) = (S)-malate(out) + citrate(in). It carries out the reaction D-threo-isocitrate(in) + citrate(out) = D-threo-isocitrate(out) + citrate(in). The catalysed reaction is citrate(out) + succinate(in) = citrate(in) + succinate(out). It catalyses the reaction cis-aconitate(in) + citrate(out) = cis-aconitate(out) + citrate(in). The enzyme catalyses trans-aconitate(in) + citrate(out) = trans-aconitate(out) + citrate(in). It carries out the reaction phosphoenolpyruvate(in) + citrate(out) = phosphoenolpyruvate(out) + citrate(in). The catalysed reaction is maleate(in) + citrate(out) = maleate(out) + citrate(in). In terms of biological role, mitochondrial electroneutral antiporter that exports citrate from the mitochondria into the cytosol in exchange for malate. Also able to mediate the exchange of citrate for isocitrate, phosphoenolpyruvate, cis-aconitate and to a lesser extent trans-aconitate, maleate and succinate. In the cytoplasm, citrate plays important roles in fatty acid and sterol synthesis, regulation of glycolysis, protein acetylation, and other physiopathological processes. This Danio rerio (Zebrafish) protein is Tricarboxylate transport protein B, mitochondrial.